A 270-amino-acid polypeptide reads, in one-letter code: 4-hydroxy-tetrahydrodipicolinate reductase (270 aa).

Residues 11–16 (GAGGRM) and glutamate 37 each bind NAD(+). Residue arginine 38 coordinates NADP(+). NAD(+) contacts are provided by residues 101-103 (GTT) and 125-128 (APNM). The Proton donor/acceptor role is filled by histidine 158. Position 159 (histidine 159) interacts with (S)-2,3,4,5-tetrahydrodipicolinate. Lysine 162 serves as the catalytic Proton donor. 168–169 (GT) contacts (S)-2,3,4,5-tetrahydrodipicolinate.

The protein belongs to the DapB family.

The protein localises to the cytoplasm. The enzyme catalyses (S)-2,3,4,5-tetrahydrodipicolinate + NAD(+) + H2O = (2S,4S)-4-hydroxy-2,3,4,5-tetrahydrodipicolinate + NADH + H(+). It carries out the reaction (S)-2,3,4,5-tetrahydrodipicolinate + NADP(+) + H2O = (2S,4S)-4-hydroxy-2,3,4,5-tetrahydrodipicolinate + NADPH + H(+). It functions in the pathway amino-acid biosynthesis; L-lysine biosynthesis via DAP pathway; (S)-tetrahydrodipicolinate from L-aspartate: step 4/4. Functionally, catalyzes the conversion of 4-hydroxy-tetrahydrodipicolinate (HTPA) to tetrahydrodipicolinate. This is 4-hydroxy-tetrahydrodipicolinate reductase from Shewanella putrefaciens (strain CN-32 / ATCC BAA-453).